Here is a 341-residue protein sequence, read N- to C-terminus: Dehydration-responsive element-binding protein 2C (341 aa).

The Nuclear localization signal motif lies at 8–48 (RKRKSRGTRDVAEILRQWREYNEQIEAESCIDGGGPKSIRK). Positions 36-63 (SCIDGGGPKSIRKPPPKGSRKGCMKGKG) are disordered. The segment covering 45–59 (SIRKPPPKGSRKGCM) has biased composition (basic residues). Residues 71–128 (DYRGVRQRRWGKWVAEIREPDGGARLWLGTFSSSYEAALAYDEAAKAIYGQSARLNLP) constitute a DNA-binding region (AP2/ERF).

Belongs to the AP2/ERF transcription factor family. ERF subfamily.

The protein localises to the nucleus. Transcriptional activator that binds specifically to the DNA sequence 5'-[AG]CCGAC-3'. Binding to the C-repeat/DRE element mediates high salinity- and abscisic acid-inducible transcription. In Arabidopsis thaliana (Mouse-ear cress), this protein is Dehydration-responsive element-binding protein 2C (DREB2C).